A 336-amino-acid chain; its full sequence is 4-hydroxythreonine-4-phosphate dehydrogenase (336 aa).

Position 140 (Thr-140) interacts with substrate. Residues His-171, His-216, and His-271 each contribute to the a divalent metal cation site. Residues Lys-279, Asn-288, and Arg-297 each coordinate substrate.

Belongs to the PdxA family. In terms of assembly, homodimer. Zn(2+) serves as cofactor. Mg(2+) is required as a cofactor. The cofactor is Co(2+).

It localises to the cytoplasm. The catalysed reaction is 4-(phosphooxy)-L-threonine + NAD(+) = 3-amino-2-oxopropyl phosphate + CO2 + NADH. The protein operates within cofactor biosynthesis; pyridoxine 5'-phosphate biosynthesis; pyridoxine 5'-phosphate from D-erythrose 4-phosphate: step 4/5. Functionally, catalyzes the NAD(P)-dependent oxidation of 4-(phosphooxy)-L-threonine (HTP) into 2-amino-3-oxo-4-(phosphooxy)butyric acid which spontaneously decarboxylates to form 3-amino-2-oxopropyl phosphate (AHAP). This Erythrobacter litoralis (strain HTCC2594) protein is 4-hydroxythreonine-4-phosphate dehydrogenase.